We begin with the raw amino-acid sequence, 503 residues long: Probable cytosol aminopeptidase (503 aa).

2 residues coordinate Mn(2+): Lys274 and Asp279. Lys286 is an active-site residue. Residues Asp297, Asp356, and Glu358 each coordinate Mn(2+). Arg360 is an active-site residue.

The protein belongs to the peptidase M17 family. Mn(2+) is required as a cofactor.

The protein localises to the cytoplasm. It carries out the reaction Release of an N-terminal amino acid, Xaa-|-Yaa-, in which Xaa is preferably Leu, but may be other amino acids including Pro although not Arg or Lys, and Yaa may be Pro. Amino acid amides and methyl esters are also readily hydrolyzed, but rates on arylamides are exceedingly low.. It catalyses the reaction Release of an N-terminal amino acid, preferentially leucine, but not glutamic or aspartic acids.. Presumably involved in the processing and regular turnover of intracellular proteins. Catalyzes the removal of unsubstituted N-terminal amino acids from various peptides. This chain is Probable cytosol aminopeptidase, found in Burkholderia ambifaria (strain MC40-6).